The sequence spans 353 residues: Ferredoxin--NADP reductase (353 aa).

FAD-binding residues include aspartate 33, glutamine 41, tyrosine 46, valine 86, phenylalanine 121, aspartate 293, and threonine 333.

This sequence belongs to the ferredoxin--NADP reductase type 2 family. Homodimer. FAD is required as a cofactor.

The catalysed reaction is 2 reduced [2Fe-2S]-[ferredoxin] + NADP(+) + H(+) = 2 oxidized [2Fe-2S]-[ferredoxin] + NADPH. This Verminephrobacter eiseniae (strain EF01-2) protein is Ferredoxin--NADP reductase.